Consider the following 322-residue polypeptide: Protein farnesyltransferase/geranylgeranyltransferase type-1 subunit alpha (322 aa).

The interval 1 to 27 (MSSSEEDDGYVPFSKRPEWSDVKPLAQ) is disordered. PFTA repeat units follow at residues 62-95 (RVLD…EQDE), 103-136 (QEMN…IGSD), 138-171 (KEKE…RDWN), 173-205 (ELAM…NPSP), 213-246 (REVE…KIST), and 287-321 (NSLN…LKLI).

This sequence belongs to the protein prenyltransferase subunit alpha family. As to quaternary structure, heterodimer of fntA and fntB (farnesyltransferase). Heterodimer of an alpha and a beta subunit. Mg(2+) serves as cofactor.

The enzyme catalyses L-cysteinyl-[protein] + (2E,6E)-farnesyl diphosphate = S-(2E,6E)-farnesyl-L-cysteinyl-[protein] + diphosphate. It catalyses the reaction geranylgeranyl diphosphate + L-cysteinyl-[protein] = S-geranylgeranyl-L-cysteinyl-[protein] + diphosphate. Functionally, catalyzes the transfer of a farnesyl or geranyl-geranyl moiety from farnesyl or geranyl-geranyl diphosphate to a cysteine at the fourth position from the C-terminus of several proteins having the C-terminal sequence Cys-aliphatic-aliphatic-X. The alpha subunit is thought to participate in a stable complex with the substrate. The beta subunit binds the peptide substrate. The sequence is that of Protein farnesyltransferase/geranylgeranyltransferase type-1 subunit alpha (fntA) from Dictyostelium discoideum (Social amoeba).